The sequence spans 221 residues: MSKPSLELKGASFTLSVLHINSSDLQAVMTELDSKLAQAPQFFLGAPLVVNLSAIQHDSLNLSALKDLLISRQLVIVGITGATTVLSKQAKDLGLAIVKAGKQSSTPPPAPRQTKIVKQNIRSGQQVYAKNGDLIIFGAVGNGAEVIADGSIHIYGALRGKAMAGAAGDTSAVIIAHSLEAELVSIAGQYWLAENLQQHSSDKSGCIRLDGESLMVESLPL.

Belongs to the MinC family. In terms of assembly, interacts with MinD and FtsZ.

Cell division inhibitor that blocks the formation of polar Z ring septums. Rapidly oscillates between the poles of the cell to destabilize FtsZ filaments that have formed before they mature into polar Z rings. Prevents FtsZ polymerization. The polypeptide is Probable septum site-determining protein MinC (Shewanella baltica (strain OS223)).